Reading from the N-terminus, the 477-residue chain is Zinc metalloproteinase/disintegrin (477 aa).

The signal sequence occupies residues 1–19 (MIQVLLVIICLAVPYQGSS). The propeptide occupies 20–186 (IILESGNVND…PIKKASQSNL (167 aa)). The 197-residue stretch at 192–388 (RYIELVIVAD…QKPQCILNKP (197 aa)) folds into the Peptidase M12B domain. Ca(2+) contacts are provided by glutamate 195 and aspartate 279. Disulfide bonds link cysteine 303-cysteine 383, cysteine 343-cysteine 367, and cysteine 345-cysteine 350. Histidine 328 serves as a coordination point for Zn(2+). The active site involves glutamate 329. Zn(2+) contacts are provided by histidine 332 and histidine 338. The Ca(2+) site is built by cysteine 383 and asparagine 386. The propeptide occupies 389–404 (LRTDTVSTPVSGNELL). The Disintegrin domain maps to 396–477 (TPVSGNELLE…AGCPRNPFHA (82 aa)). 6 disulfides stabilise this stretch: cysteine 410/cysteine 425, cysteine 412/cysteine 420, cysteine 419/cysteine 442, cysteine 433/cysteine 439, cysteine 438/cysteine 463, and cysteine 451/cysteine 470. Positions 455–457 (RGD) match the Cell attachment site motif.

This sequence belongs to the venom metalloproteinase (M12B) family. P-II subfamily. P-IIa sub-subfamily. In terms of assembly, monomer. Zn(2+) serves as cofactor. As to expression, expressed by the venom gland.

Its subcellular location is the secreted. Impairs hemostasis in the envenomed animal. In terms of biological role, inhibits platelet aggregation induced by ADP, thrombin, platelet-activating factor and collagen. Acts by inhibiting fibrinogen interaction with platelet receptors GPIIb/GPIIIa (ITGA2B/ITGB3). This is Zinc metalloproteinase/disintegrin from Gloydius halys (Chinese water mocassin).